Reading from the N-terminus, the 96-residue chain is Non-specific lipid-transfer protein 2G (96 aa).

Positions 1-29 (MAGMMKKQVVTALMLALVVLAAAPGGARA) are cleaved as a signal peptide. 4 disulfide bridges follow: Cys-31-Cys-63, Cys-39-Cys-53, Cys-54-Cys-89, and Cys-65-Cys-96.

Its subcellular location is the secreted. It localises to the cell wall. Functionally, transfer lipids across membranes. May play a role in plant defense or in the biosynthesis of cuticle layers. In Triticum aestivum (Wheat), this protein is Non-specific lipid-transfer protein 2G.